The following is a 497-amino-acid chain: Putative aldehyde dehydrogenase AldA (497 aa).

Residue 213–219 (GKGSESG) coordinates NAD(+). Catalysis depends on residues Glu-257 and Cys-291.

This sequence belongs to the aldehyde dehydrogenase family.

The catalysed reaction is an aldehyde + NAD(+) + H2O = a carboxylate + NADH + 2 H(+). In Staphylococcus haemolyticus (strain JCSC1435), this protein is Putative aldehyde dehydrogenase AldA (aldA).